The sequence spans 122 residues: Proteasome assembly chaperone 3 (122 aa).

Residue M1 is modified to N-acetylmethionine.

Belongs to the PSMG3 family. Homodimer. Interacts with PSMG4. Interacts directly with alpha and beta subunits of the 20S proteasome but dissociates before the formation of half-proteasomes, probably upon recruitment of POMP.

Chaperone protein which promotes assembly of the 20S proteasome. May cooperate with PSMG1-PSMG2 heterodimers to orchestrate the correct assembly of proteasomes. The sequence is that of Proteasome assembly chaperone 3 from Homo sapiens (Human).